The chain runs to 251 residues: Triosephosphate isomerase (251 aa).

9–11 contributes to the substrate binding site; the sequence is NWK. Catalysis depends on His95, which acts as the Electrophile. Residue Glu167 is the Proton acceptor of the active site. Residues Gly173, Ser213, and 234-235 contribute to the substrate site; that span reads GG. The residue at position 213 (Ser213) is a Phosphoserine.

The protein belongs to the triosephosphate isomerase family. Homodimer.

The protein localises to the cytoplasm. It catalyses the reaction D-glyceraldehyde 3-phosphate = dihydroxyacetone phosphate. It functions in the pathway carbohydrate biosynthesis; gluconeogenesis. It participates in carbohydrate degradation; glycolysis; D-glyceraldehyde 3-phosphate from glycerone phosphate: step 1/1. Its function is as follows. Involved in the gluconeogenesis. Catalyzes stereospecifically the conversion of dihydroxyacetone phosphate (DHAP) to D-glyceraldehyde-3-phosphate (G3P). This Anoxybacillus flavithermus (strain DSM 21510 / WK1) protein is Triosephosphate isomerase.